The sequence spans 59 residues: Mitochondrial sheath formation-associated protein (59 aa).

The Mitochondrial intermembrane portion of the chain corresponds to 1–6 (MIVLGW). Transmembrane regions (helical) follow at residues 2 to 22 (IVLG…FPEL) and 7 to 23 (MFFV…PELM). Residues 24–40 (PPTLKWQERWPVQESKT) lie on the Cytoplasmic side of the membrane.

As to quaternary structure, interacts with VDAC3.

It localises to the mitochondrion outer membrane. In terms of biological role, regulates sperm development. May be involved in mitochondrial sheath formation. The chain is Mitochondrial sheath formation-associated protein from Homo sapiens (Human).